The sequence spans 864 residues: 3-O-alpha-D-mannopyranosyl-alpha-D-mannopyranose xylosylphosphotransferase (864 aa).

The segment covering 1 to 14 has biased composition (pro residues); the sequence is MPPTALPPLRPPAQ. The tract at residues 1-47 is disordered; it reads MPPTALPPLRPPAQPYDSYSSSLSPSSPRFHPASAPHGRRAPSPSRL. The Cytoplasmic portion of the chain corresponds to 1-81; sequence MPPTALPPLR…HIRPHLTPRT (81 aa). A compositionally biased stretch (low complexity) spans 15–28; that stretch reads PYDSYSSSLSPSSP. The chain crosses the membrane as a helical span at residues 82-102; sequence LTPLLLWTLALWLVHHFLFPF. Residues 103 to 864 lie on the Lumenal side of the membrane; the sequence is SSPLAALSRP…WDPVKDRYHD (762 aa). 2 N-linked (GlcNAc...) asparagine glycosylation sites follow: N199 and N301.

Belongs to the XPT1 family. It depends on Mn(2+) as a cofactor.

It is found in the golgi apparatus membrane. The catalysed reaction is 3-alpha-D-mannopyranosyl-alpha-D-mannopyranose + UDP-alpha-D-xylose = 3-O-(6-O-alpha-D-xylosylphospho-alpha-D-mannopyranosyl)-alpha-D-mannopyranose + UMP + H(+). Its function is as follows. Xylosylphosphotransferase that is specific for UDP-xylose as a donor and mannose as an acceptor to form a xylose-alpha-1-phosphate-6-mannose linkage. Functions in the O-glycosylation of proteins en route through the secretory pathway. The sequence is that of 3-O-alpha-D-mannopyranosyl-alpha-D-mannopyranose xylosylphosphotransferase (XPT1) from Cryptococcus neoformans var. neoformans serotype D (strain B-3501A) (Filobasidiella neoformans).